The following is a 602-amino-acid chain: Elongation factor 4 (602 aa).

Residues 7–189 (SQIRNFSIIA…AIVHRIPPPA (183 aa)) enclose the tr-type G domain. GTP-binding positions include 19-24 (DHGKST) and 136-139 (NKID).

This sequence belongs to the TRAFAC class translation factor GTPase superfamily. Classic translation factor GTPase family. LepA subfamily.

It localises to the cell inner membrane. It catalyses the reaction GTP + H2O = GDP + phosphate + H(+). In terms of biological role, required for accurate and efficient protein synthesis under certain stress conditions. May act as a fidelity factor of the translation reaction, by catalyzing a one-codon backward translocation of tRNAs on improperly translocated ribosomes. Back-translocation proceeds from a post-translocation (POST) complex to a pre-translocation (PRE) complex, thus giving elongation factor G a second chance to translocate the tRNAs correctly. Binds to ribosomes in a GTP-dependent manner. The protein is Elongation factor 4 of Gloeobacter violaceus (strain ATCC 29082 / PCC 7421).